Here is a 348-residue protein sequence, read N- to C-terminus: D-alanine--D-alanine ligase (348 aa).

The ATP-grasp domain maps to 132–334; sequence KRILEVAGVP…YSDLIKELVV (203 aa). An ATP-binding site is contributed by 162–217; it reads LEKLTFPVFVKPANMGSSVGISKAENESELRSAIDLALKYDSRILIEQGVVAREIE. Aspartate 288, glutamate 301, and asparagine 303 together coordinate Mg(2+).

The protein belongs to the D-alanine--D-alanine ligase family. Mg(2+) is required as a cofactor. It depends on Mn(2+) as a cofactor.

The protein resides in the cytoplasm. It catalyses the reaction 2 D-alanine + ATP = D-alanyl-D-alanine + ADP + phosphate + H(+). The protein operates within cell wall biogenesis; peptidoglycan biosynthesis. Cell wall formation. The sequence is that of D-alanine--D-alanine ligase from Streptococcus thermophilus (strain ATCC BAA-491 / LMD-9).